Reading from the N-terminus, the 459-residue chain is Cysteine--tRNA ligase (459 aa).

Cys-28 lines the Zn(2+) pocket. Positions 30–40 match the 'HIGH' region motif; that stretch reads VTVYDLCHIGH. 3 residues coordinate Zn(2+): Cys-209, His-234, and Glu-238. A 'KMSKS' region motif is present at residues 266-270; the sequence is KMSKS. Lys-269 contributes to the ATP binding site.

The protein belongs to the class-I aminoacyl-tRNA synthetase family. In terms of assembly, monomer. Zn(2+) serves as cofactor.

Its subcellular location is the cytoplasm. It carries out the reaction tRNA(Cys) + L-cysteine + ATP = L-cysteinyl-tRNA(Cys) + AMP + diphosphate. The protein is Cysteine--tRNA ligase of Shewanella oneidensis (strain ATCC 700550 / JCM 31522 / CIP 106686 / LMG 19005 / NCIMB 14063 / MR-1).